The following is a 304-amino-acid chain: KIN17-like protein (304 aa).

A C2H2-type zinc finger spans residues 26–50 (WYCSACQKQMRDENGFKCHTQSEGH). Disordered stretches follow at residues 204-228 (IDLSKKGNPIQLNLSSSSDSHSAQN) and 261-291 (LNKSRKKNNKDSLDQGQNVKRPRSAVEDIIA).

Belongs to the KIN17 family.

Its subcellular location is the nucleus. It localises to the nucleolus. This Schizosaccharomyces pombe (strain 972 / ATCC 24843) (Fission yeast) protein is KIN17-like protein.